The chain runs to 815 residues: cGMP-specific 3',5'-cyclic phosphodiesterase delta (815 aa).

The Cytoplasmic segment spans residues 1–56 (MNEYNNDNMEQEKEKKKEEQKYKNIIKKEYFIFPRLYDKNKEIEYNKLRIHNIKEY). The chain crosses the membrane as a helical span at residues 57–77 (ICIHLTISLFIILIECFVFSF). The Extracellular portion of the chain corresponds to 78 to 86 (NLNIKDTTY). A helical transmembrane segment spans residues 87–107 (VEICVVIFSILNCLMHIVVLI). Over 108–120 (KMYFFTSESVYTK) the chain is Cytoplasmic. Residues 121–141 (GVFIGYIVLNQVFQFLSLYFF) form a helical membrane-spanning segment. At 142–160 (TKRNEQSKNDIAHLKYYDN) the chain is on the extracellular side. Residues 161–181 (SFNLYVHFFVDSVFILCLPAL) traverse the membrane as a helical segment. Residues 182–183 (SF) are Cytoplasmic-facing. Residues 184-204 (FLSVLFMMMFLCLNILLINMI) traverse the membrane as a helical segment. Topologically, residues 205–210 (KFNKTN) are extracellular. A glycan (N-linked (GlcNAc...) asparagine) is linked at N207. Residues 211–231 (YGSDIYHICLLSVVLLMFLIL) form a helical membrane-spanning segment. Residues 232 to 815 (RYMMEERNRL…FKEEIKHGKL (584 aa)) are Cytoplasmic-facing. The PDEase domain maps to 384–762 (YEVEVLKNIK…QTWRLIEKNI (379 aa)). H459 serves as the catalytic Proton donor. Residue 459–463 (HNANH) coordinates 3',5'-cyclic GMP. A divalent metal cation-binding residues include H463, H499, D500, and D616. 3 residues coordinate 3',5'-cyclic GMP: D500, D616, and Q715.

It belongs to the cyclic nucleotide phosphodiesterase family. It depends on a divalent metal cation as a cofactor.

Its subcellular location is the membrane. The catalysed reaction is 3',5'-cyclic GMP + H2O = GMP + H(+). It participates in purine metabolism; 3',5'-cyclic GMP degradation; GMP from 3',5'-cyclic GMP: step 1/1. Functionally, specifically hydrolyzes the second messenger cGMP, which is a key regulator of many important physiological processes. Probably by regulating cGMP levels, required for activation of gametogenesis. This Plasmodium falciparum (isolate 3D7) protein is cGMP-specific 3',5'-cyclic phosphodiesterase delta.